The sequence spans 513 residues: 2,3-bisphosphoglycerate-independent phosphoglycerate mutase (513 aa).

Residues aspartate 15 and serine 65 each coordinate Mn(2+). Serine 65 acts as the Phosphoserine intermediate in catalysis. Residues histidine 126, 156-157, arginine 188, arginine 194, 263-266, and lysine 337 contribute to the substrate site; these read RD and RADR. Aspartate 402, histidine 406, aspartate 443, histidine 444, and histidine 461 together coordinate Mn(2+).

Belongs to the BPG-independent phosphoglycerate mutase family. Monomer. Requires Mn(2+) as cofactor.

It catalyses the reaction (2R)-2-phosphoglycerate = (2R)-3-phosphoglycerate. The protein operates within carbohydrate degradation; glycolysis; pyruvate from D-glyceraldehyde 3-phosphate: step 3/5. Catalyzes the interconversion of 2-phosphoglycerate and 3-phosphoglycerate. The polypeptide is 2,3-bisphosphoglycerate-independent phosphoglycerate mutase (Moorella thermoacetica (strain ATCC 39073 / JCM 9320)).